The following is a 97-amino-acid chain: uncharacterized protein (97 aa).

This is an uncharacterized protein from Geobacillus stearothermophilus (Bacillus stearothermophilus).